Reading from the N-terminus, the 53-residue chain is MSAYRYANLTNTKYIPSVYAVMATAGCDDRKIKRKEKGKRHAAPLSLMGVHKR.

Positions 34–53 are disordered; it reads RKEKGKRHAAPLSLMGVHKR.

This is an uncharacterized protein from Treponema pallidum (strain Nichols).